The primary structure comprises 392 residues: Sterol methyltransferase-like 3 (392 aa).

Residues 20 to 42 traverse the membrane as a helical segment; it reads VTPWQAAAGVTAAIFIGSYLWHS.

This sequence belongs to the class I-like SAM-binding methyltransferase superfamily. Erg6/SMT family.

It localises to the microsome membrane. Its function is as follows. Unable to convert squalene, botryococcene, cycloartenol, zymosterol or lanosterol to mono-, di-, tri- or tetramethylated derivatives. The protein is Sterol methyltransferase-like 3 (SMT-3) of Botryococcus braunii (Green alga).